Reading from the N-terminus, the 104-residue chain is Pyrimidine/purine nucleoside phosphorylase (104 aa).

This sequence belongs to the nucleoside phosphorylase PpnP family.

The catalysed reaction is a purine D-ribonucleoside + phosphate = a purine nucleobase + alpha-D-ribose 1-phosphate. It carries out the reaction adenosine + phosphate = alpha-D-ribose 1-phosphate + adenine. The enzyme catalyses cytidine + phosphate = cytosine + alpha-D-ribose 1-phosphate. It catalyses the reaction guanosine + phosphate = alpha-D-ribose 1-phosphate + guanine. The catalysed reaction is inosine + phosphate = alpha-D-ribose 1-phosphate + hypoxanthine. It carries out the reaction thymidine + phosphate = 2-deoxy-alpha-D-ribose 1-phosphate + thymine. The enzyme catalyses uridine + phosphate = alpha-D-ribose 1-phosphate + uracil. It catalyses the reaction xanthosine + phosphate = alpha-D-ribose 1-phosphate + xanthine. Functionally, catalyzes the phosphorolysis of diverse nucleosides, yielding D-ribose 1-phosphate and the respective free bases. Can use uridine, adenosine, guanosine, cytidine, thymidine, inosine and xanthosine as substrates. Also catalyzes the reverse reactions. The protein is Pyrimidine/purine nucleoside phosphorylase of Trichlorobacter lovleyi (strain ATCC BAA-1151 / DSM 17278 / SZ) (Geobacter lovleyi).